Consider the following 349-residue polypeptide: Ureidoglycolate dehydrogenase (NAD(+)) (349 aa).

Catalysis depends on histidine 116, which acts as the Proton acceptor. NAD(+)-binding positions include serine 140, 174-176, lysine 224, and 306-308; these read DMA and GQD.

The protein belongs to the LDH2/MDH2 oxidoreductase family. Homodimer.

It is found in the cytoplasm. The enzyme catalyses (S)-ureidoglycolate + NAD(+) = N-carbamoyl-2-oxoglycine + NADH + H(+). It functions in the pathway nitrogen metabolism; (S)-allantoin degradation; oxalurate from (S)-ureidoglycolate: step 1/1. In terms of biological role, allD plays a pivotal role as a metabolic branch-point enzyme in nitrogen utilization via the assimilation of allantoin. It is able to utilize allantoin as a sole source of nitrogen under anaerobic conditions. Catalyzes the oxidation of ureidoglycolate to oxalurate. This Escherichia coli (strain K12) protein is Ureidoglycolate dehydrogenase (NAD(+)).